A 173-amino-acid chain; its full sequence is Development-specific protein S (173 aa).

Beta/gamma crystallin 'Greek key' domains lie at 2–46 (ANIT…KVPP) and 48–86 (VKAI…RVIS). Ca(2+) contacts are provided by Tyr8, Asn37, Thr38, Ser40, Gln54, Asn77, Asn78, and Ser80. Residues 87-90 (VPVQ) form a connecting peptide region. 2 consecutive Beta/gamma crystallin 'Greek key' domains span residues 91–135 (PRAR…KPQG) and 136–173 (LAVV…IRIS).

It belongs to the beta/gamma-crystallin family.

Its function is as follows. Protein S, induced in large amounts during fruiting body formation, assembles on the surface of myxospores in the presence of calcium ions. The chain is Development-specific protein S (tps) from Myxococcus xanthus.